Here is a 94-residue protein sequence, read N- to C-terminus: Co-chaperonin GroES (94 aa).

It belongs to the GroES chaperonin family. In terms of assembly, heptamer of 7 subunits arranged in a ring. Interacts with the chaperonin GroEL.

It is found in the cytoplasm. Its function is as follows. Together with the chaperonin GroEL, plays an essential role in assisting protein folding. The GroEL-GroES system forms a nano-cage that allows encapsulation of the non-native substrate proteins and provides a physical environment optimized to promote and accelerate protein folding. GroES binds to the apical surface of the GroEL ring, thereby capping the opening of the GroEL channel. This Finegoldia magna (strain ATCC 29328 / DSM 20472 / WAL 2508) (Peptostreptococcus magnus) protein is Co-chaperonin GroES.